Consider the following 1534-residue polypeptide: DNA polymerase alpha catalytic subunit (1534 aa).

Positions 1-12 (MDEGSADAGASG) are enriched in low complexity. Disordered stretches follow at residues 1 to 23 (MDEG…SEAV), 96 to 141 (THRT…LSAA), and 864 to 905 (FNST…GPSY). Residues 116–125 (RKRKQPRPQS) are compositionally biased toward basic residues. Positions 127–141 (RPPQQSAAAASLSAA) are enriched in low complexity. Composition is skewed to basic and acidic residues over residues 864-882 (FNST…RPDE) and 889-898 (DEGHHVDQGK). Zn(2+)-binding residues include Cys1340, Cys1343, Cys1383, Cys1386, Cys1422, Cys1427, Cys1448, and Cys1454. The CysA-type zinc finger occupies 1340–1386 (CPSCSTTFDCPPVSSLIIGSSSGNVSNPNEGNDASINFWRRMRCPRC). Positions 1422–1451 (CDDEGCKYSTHSVNLRVMGDSERGTICPNY) match the CysB motif motif.

The protein belongs to the DNA polymerase type-B family.

The protein localises to the nucleus. The enzyme catalyses DNA(n) + a 2'-deoxyribonucleoside 5'-triphosphate = DNA(n+1) + diphosphate. Its function is as follows. Polymerase alpha in a complex with DNA primase is a replicative polymerase. In Oryza sativa subsp. japonica (Rice), this protein is DNA polymerase alpha catalytic subunit.